Reading from the N-terminus, the 596-residue chain is Elongation factor 4 (596 aa).

A tr-type G domain is found at 2–183; it reads ENIRNFSIIA…AIIKRIPAPK (182 aa). GTP contacts are provided by residues 14-19 and 130-133; these read DHGKST and NKID.

The protein belongs to the TRAFAC class translation factor GTPase superfamily. Classic translation factor GTPase family. LepA subfamily.

It is found in the cell inner membrane. The catalysed reaction is GTP + H2O = GDP + phosphate + H(+). Functionally, required for accurate and efficient protein synthesis under certain stress conditions. May act as a fidelity factor of the translation reaction, by catalyzing a one-codon backward translocation of tRNAs on improperly translocated ribosomes. Back-translocation proceeds from a post-translocation (POST) complex to a pre-translocation (PRE) complex, thus giving elongation factor G a second chance to translocate the tRNAs correctly. Binds to ribosomes in a GTP-dependent manner. The polypeptide is Elongation factor 4 (Campylobacter hominis (strain ATCC BAA-381 / DSM 21671 / CCUG 45161 / LMG 19568 / NCTC 13146 / CH001A)).